The sequence spans 500 residues: Phenylalanine--tRNA ligase alpha subunit (500 aa).

L-phenylalanine is bound by residues T343, 382 to 384 (QVD), and F423. E425 provides a ligand contact to Mg(2+). F448 contributes to the L-phenylalanine binding site.

This sequence belongs to the class-II aminoacyl-tRNA synthetase family. Phe-tRNA synthetase alpha subunit type 2 subfamily. As to quaternary structure, tetramer of two alpha and two beta subunits. Mg(2+) is required as a cofactor.

The protein localises to the cytoplasm. The enzyme catalyses tRNA(Phe) + L-phenylalanine + ATP = L-phenylalanyl-tRNA(Phe) + AMP + diphosphate + H(+). The chain is Phenylalanine--tRNA ligase alpha subunit from Thermococcus onnurineus (strain NA1).